The following is a 525-amino-acid chain: Protein-serine O-palmitoleoyltransferase porcupine (525 aa).

Transmembrane regions (helical) follow at residues 83-103 (VMQY…LCLL), 125-145 (LIIL…LAAV), 159-179 (GAQV…LLIW), 220-240 (FAYL…WVSF), 260-280 (LLPN…VAPA), 301-318 (VRSS…LLVA), 395-415 (SLLH…AFLA), 467-487 (NLAF…VLLG), and 505-525 (QAGY…LFIS). H398 is a catalytic residue.

This sequence belongs to the membrane-bound acyltransferase family. Porcupine subfamily. In terms of assembly, interacts with wg and Wnt5.

The protein resides in the endoplasmic reticulum membrane. It catalyses the reaction [Wnt protein]-L-serine + (9Z)-hexadecenoyl-CoA = [Wnt protein]-O-(9Z)-hexadecenoyl-L-serine + CoA. Its function is as follows. Protein-serine O-palmitoleoyltransferase that acts as a key regulator of the Wnt signaling pathway by mediating the attachment of palmitoleate, a 16-carbon monounsaturated fatty acid (C16:1(9Z)), to Wnt proteins. Serine palmitoleoylation of Wnt proteins is required for efficient binding to frizzled receptors. Also facilitates the glycosylation of Wnt family members, including wg and Wnt5. The cotranslational disulfide bond formation of wg competes with the N-glycosylation. Porc stimulates the post-translational N-glycosylation by anchoring wg at the ER membrane, probably through acylation. This is Protein-serine O-palmitoleoyltransferase porcupine from Drosophila melanogaster (Fruit fly).